A 63-amino-acid chain; its full sequence is Race-specific elicitor A9 (63 aa).

The signal sequence occupies residues M1–A23. A propeptide spanning residues A24–D35 is cleaved from the precursor. 3 cysteine pairs are disulfide-bonded: C37-C51, C41-C54, and C47-C61.

Functionally, this necrosis-inducing peptide induces a hypersensitive response on Cf-9 tomato genotypes. Race-specific elicitors are compounds which only induce defense responses in genotypes of host plants which are resistant to the pathogenic race that produces the elicitor, but not in susceptible genotypes. The protein is Race-specific elicitor A9 (AVR9) of Passalora fulva (Tomato leaf mold).